Reading from the N-terminus, the 148-residue chain is MSEKNENVYDLSFFMPGKTIEAEEIKVPISKRFVDKKGNVIPFILKPITTERIDELEKENTTFKNVKGRGRVKDLDSQRFYARIAIESTIYPDFRSKDLREAYKTADPVEVAKRVLSVGGEYANWLNKAIEINGFEDDLEDLEEEAKN.

This sequence to B.subtilis YqbN.

The protein is Phage-like element PBSX protein XkdN (xkdN) of Bacillus subtilis (strain 168).